The primary structure comprises 298 residues: Putative S-adenosyl-L-methionine-dependent methyltransferase MSMEG_1480/MSMEI_1444 (298 aa).

S-adenosyl-L-methionine-binding positions include Asp127 and 156 to 157 (DL).

The protein belongs to the UPF0677 family.

Functionally, exhibits S-adenosyl-L-methionine-dependent methyltransferase activity. The sequence is that of Putative S-adenosyl-L-methionine-dependent methyltransferase MSMEG_1480/MSMEI_1444 from Mycolicibacterium smegmatis (strain ATCC 700084 / mc(2)155) (Mycobacterium smegmatis).